We begin with the raw amino-acid sequence, 91 residues long: MVSFNATAILLLLLANAFSKPLYVPEHCGGMSGTLFQACIRQTMVDTTGMYTNSAMSHDGVTIPFDRDGIVHEDHYTETNPTPLFDAGFSV.

A signal peptide spans 1 to 19 (MVSFNATAILLLLLANAFS).

The sequence is that of Non-structural protein 3a from Tylonycteris pachypus (Lesser bamboo bat).